A 243-amino-acid chain; its full sequence is MAEVLLGVNIDHIATVRNARGTHYPDPVQAAFVAEQAGADGITIHLREDRRHITDRDVELLKKTIQTRMNLEMAVTDEMVDIACRIKPEFCCLVPEKRQEVTTEGGLDVIGQKDKVAAAVKRLSDAGILVSLFIDAEHRQIDAANEVGAPFIEIHTGAYADAKNEVEQEKEFHRIKAAATYAASKGLTVNAGHGLTYHNVQRIAALPEIYELNIGHAIIGRAVFSGLTAAVADMKTQMRKARR.

Asn-9 is a binding site for 3-amino-2-oxopropyl phosphate. 11–12 (DH) is a 1-deoxy-D-xylulose 5-phosphate binding site. Arg-20 serves as a coordination point for 3-amino-2-oxopropyl phosphate. Residue His-45 is the Proton acceptor of the active site. Positions 47 and 52 each coordinate 1-deoxy-D-xylulose 5-phosphate. Residue Glu-72 is the Proton acceptor of the active site. Thr-102 serves as a coordination point for 1-deoxy-D-xylulose 5-phosphate. The active-site Proton donor is His-193. 3-amino-2-oxopropyl phosphate contacts are provided by residues Gly-194 and 215–216 (GH).

Belongs to the PNP synthase family. In terms of assembly, homooctamer; tetramer of dimers.

It is found in the cytoplasm. The enzyme catalyses 3-amino-2-oxopropyl phosphate + 1-deoxy-D-xylulose 5-phosphate = pyridoxine 5'-phosphate + phosphate + 2 H2O + H(+). The protein operates within cofactor biosynthesis; pyridoxine 5'-phosphate biosynthesis; pyridoxine 5'-phosphate from D-erythrose 4-phosphate: step 5/5. Its function is as follows. Catalyzes the complicated ring closure reaction between the two acyclic compounds 1-deoxy-D-xylulose-5-phosphate (DXP) and 3-amino-2-oxopropyl phosphate (1-amino-acetone-3-phosphate or AAP) to form pyridoxine 5'-phosphate (PNP) and inorganic phosphate. The chain is Pyridoxine 5'-phosphate synthase from Photorhabdus laumondii subsp. laumondii (strain DSM 15139 / CIP 105565 / TT01) (Photorhabdus luminescens subsp. laumondii).